A 61-amino-acid chain; its full sequence is uncharacterized protein (61 aa).

Helical transmembrane passes span 5–25 (MLYF…SLLL) and 29–49 (YILT…PWYT).

It localises to the membrane. This is an uncharacterized protein from Saccharomyces cerevisiae (strain ATCC 204508 / S288c) (Baker's yeast).